The sequence spans 553 residues: CTP synthase (553 aa).

Residues 1–266 (MKYIFVTGGV…GKAVEDLLGL (266 aa)) are amidoligase domain. Ser-12 is a binding site for CTP. Ser-12 provides a ligand contact to UTP. 13 to 18 (SLGKGV) lines the ATP pocket. Residue Tyr-53 participates in L-glutamine binding. Asp-70 provides a ligand contact to ATP. The Mg(2+) site is built by Asp-70 and Glu-140. Residues 147-149 (DIE), 187-192 (KTKPTQ), and Lys-223 contribute to the CTP site. Residues 187–192 (KTKPTQ) and Lys-223 each bind UTP. Positions 291 to 541 (TIAIAGKYTE…VAAALQSGPS (251 aa)) constitute a Glutamine amidotransferase type-1 domain. Gly-353 provides a ligand contact to L-glutamine. The active-site Nucleophile; for glutamine hydrolysis is Cys-380. L-glutamine is bound by residues 381-384 (LGMQ), Glu-404, and Arg-464. Active-site residues include His-514 and Glu-516.

This sequence belongs to the CTP synthase family. As to quaternary structure, homotetramer.

The catalysed reaction is UTP + L-glutamine + ATP + H2O = CTP + L-glutamate + ADP + phosphate + 2 H(+). It carries out the reaction L-glutamine + H2O = L-glutamate + NH4(+). It catalyses the reaction UTP + NH4(+) + ATP = CTP + ADP + phosphate + 2 H(+). It participates in pyrimidine metabolism; CTP biosynthesis via de novo pathway; CTP from UDP: step 2/2. Its activity is regulated as follows. Allosterically activated by GTP, when glutamine is the substrate; GTP has no effect on the reaction when ammonia is the substrate. The allosteric effector GTP functions by stabilizing the protein conformation that binds the tetrahedral intermediate(s) formed during glutamine hydrolysis. Inhibited by the product CTP, via allosteric rather than competitive inhibition. Catalyzes the ATP-dependent amination of UTP to CTP with either L-glutamine or ammonia as the source of nitrogen. Regulates intracellular CTP levels through interactions with the four ribonucleotide triphosphates. This chain is CTP synthase, found in Deinococcus geothermalis (strain DSM 11300 / CIP 105573 / AG-3a).